The chain runs to 584 residues: MANTVEADGSNDEGYEAAEEGPEDEEDEKREISAIRSYRDVMKLCAAHLPTESDAPNHYQAVCRALFAETMELHTFLAKVKSAKENLKKIQEMEKSDESSTDLEELKNADWARFWVQVMRDLRNGVKLKKVQERQYNPLPIEYQLTPYEMLMDDIRCKRYTLRKVMVNGDIPPRLKKSAHEIILDFIRSRPPLNPVSARKLKPTPPRPRSLHERILEEIKAERKLRPVSPEEIRRSRLDVTTPESTKNLMESSMVNGGLTSQTKENGLSSAEQVPAQRKKLLKAPTLAELDSSESEEETLHKSTSSSSVSPSFPEEPVLEAVSTRKKPPKFLPISSTPQPERRQPPQRRHSIEKETPTNVRQFLPPSRQSSRSLEEFCYPVECLALTVEEVMHIRQVLVKAELEKYQQYKDIYTALKKGKLCFCCRTRRFSFFTWSYTCQFCKRPVCSQCCKKMRLPSKPYSTLPIFSLGPSALQRGESSMRSEKPSTAHHRPLRSIARFSSKSKSMDKSDEELQFPKELMEDWSTMEVCVDCKKFISEIISSSRRSLVLANKRARLKRKTQSFYMSPPGPSEYCPSERTISEI.

The disordered stretch occupies residues 1 to 30 (MANTVEADGSNDEGYEAAEEGPEDEEDEKR). Residues 1–73 (MANTVEADGS…RALFAETMEL (73 aa)) enclose the KIND domain. The segment covering 9–28 (GSNDEGYEAAEEGPEDEEDE) has biased composition (acidic residues). Residues 71-99 (MELHTFLAKVKSAKENLKKIQEMEKSDES) are a coiled coil. WH2 domains lie at 147 to 165 (PYEM…LRKV) and 211 to 228 (LHER…LRPV). Residues 224–238 (KLRPVSPEEIRRSRL) are compositionally biased toward basic and acidic residues. Positions 224-366 (KLRPVSPEEI…PTNVRQFLPP (143 aa)) are disordered. Ser229 is subject to Phosphoserine. Residues 242–272 (TPESTKNLMESSMVNGGLTSQTKENGLSSAE) show a composition bias toward polar residues. Ser292, Ser293, and Ser295 each carry phosphoserine. Residues 302–320 (KSTSSSSVSPSFPEEPVLE) are compositionally biased toward low complexity. At Thr337 the chain carries Phosphothreonine. Residues 340 to 356 (PERRQPPQRRHSIEKET) show a composition bias toward basic and acidic residues. The span at 357–366 (PTNVRQFLPP) shows a compositional bias: polar residues. Residues 384–404 (LALTVEEVMHIRQVLVKAELE) are spir-box. A phosphoserine mark is found at Ser506, Ser510, and Ser563.

This sequence belongs to the spire family. Interacts with FMN2.

It is found in the cytoplasm. The protein localises to the cytoskeleton. Its subcellular location is the cytosol. It localises to the cleavage furrow. The protein resides in the perinuclear region. It is found in the cell membrane. The protein localises to the cytoplasmic vesicle membrane. Functionally, acts as an actin nucleation factor, remains associated with the slow-growing pointed end of the new filament. Involved in intracellular vesicle transport along actin fibers, providing a novel link between actin cytoskeleton dynamics and intracellular transport. Required for asymmetric spindle positioning and asymmetric cell division during meiosis. Required for normal formation of the cleavage furrow and for polar body extrusion during female germ cell meiosis. Also acts in the nucleus: together with FMN2, promotes assembly of nuclear actin filaments in response to DNA damage in order to facilitate movement of chromatin and repair factors after DNA damage. In addition, promotes innate immune signaling downstream of dsRNA sensing. Mechanistically, contributes to IRF3 phosphorylation and activation downstream of MAVS and upstream of TBK1. The protein is Protein spire homolog 1 (SPIRE1) of Macaca fascicularis (Crab-eating macaque).